Reading from the N-terminus, the 105-residue chain is Neuropeptide-like protein 32 (105 aa).

Residues Met-1–Ser-22 form the signal peptide. A propeptide spanning residues Phe-23–Arg-54 is cleaved from the precursor. Glycine amide is present on Gly-59. Trp-64 is subject to Tryptophan amide. Glycine amide occurs at positions 68, 73, and 80. The residue at position 86 (Trp-86) is a Tryptophan amide. Glycine amide occurs at positions 91 and 98. Trp-103 bears the Tryptophan amide mark.

It belongs to the YARP (YGGW-amide related peptide) family.

It localises to the secreted. May have antimicrobial activity. The protein is Neuropeptide-like protein 32 (nlp-32) of Caenorhabditis elegans.